The following is a 158-amino-acid chain: Protein ORF4 (158 aa).

In terms of biological role, acts by interacting with multiple viral and host proteins to enhance the activity of viral RNA-dependent RNA polymerase. The sequence is that of Protein ORF4 from Hepatitis E virus genotype 1 (isolate Human/Pakistan/Sar-55) (HEV-1).